The chain runs to 117 residues: MSWRGRSTYYWPRPRRYVQPPEMIGPMRPEQFSDEVEPATPEEGEPATQRQDPAAAQEGEDEGASAGQGPKPEADSQEQGHPQTGCECEDGPDGQEMDPPNPEEVKTPEEGEKQSQC.

The tract at residues Met-1–Cys-117 is disordered. 2 stretches are compositionally biased toward acidic residues: residues Phe-32–Glu-45 and Glu-87–Glu-96. The segment covering Glu-103–Cys-117 has biased composition (basic and acidic residues).

This sequence belongs to the GAGE family. Expressed in a variety of tumor tissues but not in normal tissues, except testis.

In terms of biological role, antigen, recognized on melanoma by autologous cytolytic T-lymphocytes. The polypeptide is G antigen 4 (Homo sapiens (Human)).